The following is a 240-amino-acid chain: Large ribosomal subunit protein uL2 (240 aa).

Polar residues predominate over residues 1-10; that stretch reads MGHRISTQSR. 2 disordered regions span residues 1 to 20 and 204 to 240; these read MGHR…YRAP and FGGG…GYRR.

Belongs to the universal ribosomal protein uL2 family. In terms of assembly, part of the 50S ribosomal subunit. Forms a bridge to the 30S subunit in the 70S ribosome.

In terms of biological role, one of the primary rRNA binding proteins. Required for association of the 30S and 50S subunits to form the 70S ribosome, for tRNA binding and peptide bond formation. It has been suggested to have peptidyltransferase activity; this is somewhat controversial. Makes several contacts with the 16S rRNA in the 70S ribosome. The protein is Large ribosomal subunit protein uL2 of Methanocorpusculum labreanum (strain ATCC 43576 / DSM 4855 / Z).